Consider the following 92-residue polypeptide: MKKKKVEIIMGKKKLQILKGSVIKNKMQKSIVVSVERFVKHPIYKKFMKKTTKLHVHDENNSSKVGDVVEIQECRPISKTKSWKLINIKKNN.

Belongs to the universal ribosomal protein uS17 family. As to quaternary structure, part of the 30S ribosomal subunit.

Functionally, one of the primary rRNA binding proteins, it binds specifically to the 5'-end of 16S ribosomal RNA. This is Small ribosomal subunit protein uS17 from Wigglesworthia glossinidia brevipalpis.